Reading from the N-terminus, the 163-residue chain is Jun dimerization protein 2 (163 aa).

Disordered stretches follow at residues 1 to 20 (MMPG…PGLG) and 58 to 89 (GKRP…AARC). Lysine 65 is covalently cross-linked (Glycyl lysine isopeptide (Lys-Gly) (interchain with G-Cter in SUMO2)). A bZIP domain is found at 72-135 (EERRKRRREK…QQLILMLNRH (64 aa)). The basic motif stretch occupies residues 74–96 (RRKRRREKNKVAAARCRNKKKER). Positions 100–128 (LQRESERLELMNAELKTQIEELKQERQQL) are leucine-zipper. Threonine 148 is modified (phosphothreonine; by MAPK8).

It belongs to the bZIP family. ATF subfamily. As to quaternary structure, forms a homodimer or heterodimer with JUN, JUNB, JUND, CEBPG and ATF2 thereby inhibiting transactivation by JUN, ATF2 and CEBPG. Binds multiple DNA elements such as cAMP-response element (CRE) and TPA response element (TRE) either as homodimer or heterodimer. Interacts with IRF2BP1. In terms of processing, phosphorylation of Thr-148 by MAPK8 in response to different stress conditions such as, UV irradiation, oxidatives stress and anisomycin treatments. Polyubiquitinated; probably by IRF2BP1.

Its subcellular location is the nucleus. Functionally, component of the AP-1 transcription factor that represses transactivation mediated by the Jun family of proteins. Involved in a variety of transcriptional responses associated with AP-1 such as UV-induced apoptosis, cell differentiation, tumorigenesis and antitumogeneris. Can also function as a repressor by recruiting histone deacetylase 3/HDAC3 to the promoter region of JUN. May control transcription via direct regulation of the modification of histones and the assembly of chromatin. The polypeptide is Jun dimerization protein 2 (JDP2) (Homo sapiens (Human)).